The following is a 726-amino-acid chain: Probable dipeptidyl-peptidase 5 (726 aa).

Positions 1–19 (MGALQWLSITAAAASAVSA) are cleaved as a signal peptide. Asparagine 97, asparagine 153, asparagine 259, asparagine 398, asparagine 453, and asparagine 529 each carry an N-linked (GlcNAc...) asparagine glycan. Serine 564 serves as the catalytic Charge relay system. N-linked (GlcNAc...) asparagine glycosylation occurs at asparagine 611. Residues aspartate 647 and histidine 679 each act as charge relay system in the active site.

This sequence belongs to the peptidase S9C family.

The protein localises to the secreted. In terms of biological role, extracellular dipeptidyl-peptidase which removes N-terminal dipeptides sequentially from polypeptides having unsubstituted N-termini. The protein is Probable dipeptidyl-peptidase 5 (dpp5) of Aspergillus niger.